The sequence spans 837 residues: V-type proton ATPase 116 kDa subunit a 1 (837 aa).

Residues 1-388 (MGELFRSEEM…DAYGIGTYRE (388 aa)) are Cytoplasmic-facing. A phosphothreonine mark is found at Thr-250 and Thr-360. Residue Tyr-364 is modified to Phosphotyrosine. A helical membrane pass occupies residues 389 to 407 (INPAPYTIITFPFLFAVMF). At 408 to 409 (GD) the chain is on the vacuolar side. The helical transmembrane segment at 410-426 (FGHGILMTLFAVWMVLR) threads the bilayer. Topologically, residues 427–441 (ESRILSQKNENEMFS) are cytoplasmic. Residues 442-471 (TVFSGRYIILLMGVFSMYTGLIYNDCFSKS) traverse the membrane as a helical segment. At 472-534 (LNIFGSSWSV…ATNKLTFLNS (63 aa)) the chain is on the vacuolar side. The helical transmembrane segment at 535 to 554 (FKMKMSVILGIIHMLFGVSL) threads the bilayer. The Cytoplasmic portion of the chain corresponds to 555–572 (SLFNHIYFKKPLNIYFGF). The helical transmembrane segment at 573–593 (IPEIIFMTSLFGYLVILIFYK) threads the bilayer. The Vacuolar segment spans residues 594-638 (WTAYDAHTSENAPSLLIHFINMFLFSYPESGYSMLYSGQKGIQCF). A helical membrane pass occupies residues 639-658 (LVVVALLCVPWMLLFKPLVL). Residues 659–724 (RRQYLRRKHL…ATMVHQAIHT (66 aa)) lie on the Cytoplasmic side of the membrane. Residues 725–749 (IEYCLGCISNTASYLRLWALSLAHA) traverse the membrane as a helical segment. Topologically, residues 750 to 770 (QLSEVLWTMVIHIGLSVKSLA) are vacuolar. The chain crosses the membrane as a helical span at residues 771 to 809 (GGLVLFFFFTAFATLTVAILLIMEGLSAFLHALRLHWVE). The Cytoplasmic portion of the chain corresponds to 810–837 (FQNKFYSGTGFKFLPFSFEHIREGKFGE).

The protein belongs to the V-ATPase 116 kDa subunit family. V-ATPase is a heteromultimeric enzyme made up of two complexes: the ATP-hydrolytic V1 complex and the proton translocation V0 complex. The V1 complex consists of three catalytic AB heterodimers that form a heterohexamer, three peripheral stalks each consisting of EG heterodimers, one central rotor including subunits D and F, and the regulatory subunits C and H. The proton translocation complex V0 consists of the proton transport subunit a, a ring of proteolipid subunits c9c'', rotary subunit d, subunits e and f, and the accessory subunits ATP6AP1/Ac45 and ATP6AP2/PRR. Interacts with SPAAR.

The protein localises to the cytoplasmic vesicle. Its subcellular location is the clathrin-coated vesicle membrane. The protein resides in the secretory vesicle. It is found in the synaptic vesicle membrane. It localises to the melanosome. Functionally, subunit of the V0 complex of vacuolar(H+)-ATPase (V-ATPase), a multisubunit enzyme composed of a peripheral complex (V1) that hydrolyzes ATP and a membrane integral complex (V0) that translocates protons. V-ATPase is responsible for the acidification of various organelles, such as lysosomes, endosomes, the trans-Golgi network, and secretory granules, including synaptic vesicles. In certain cell types, can be exported to the plasma membrane, where it is involved in the acidification of the extracellular environment. Required for assembly and activity of the vacuolar ATPase. Through its action on compartment acidification, plays an essential role in neuronal development in terms of integrity and connectivity of neurons. The protein is V-type proton ATPase 116 kDa subunit a 1 (ATP6V0A1) of Pongo abelii (Sumatran orangutan).